The chain runs to 114 residues: NADH-quinone oxidoreductase subunit K 2 (114 aa).

3 consecutive transmembrane segments (helical) span residues 1–21 (MIVPFGHVLLLAGALFGLGVF), 29–49 (LIMIVLGVEIMLNAASIAFIG), and 62–82 (FVLFILAVAATEVSIGLAIIV).

The protein belongs to the complex I subunit 4L family. As to quaternary structure, NDH-1 is composed of 14 different subunits. Subunits NuoA, H, J, K, L, M, N constitute the membrane sector of the complex.

It is found in the cell inner membrane. It carries out the reaction a quinone + NADH + 5 H(+)(in) = a quinol + NAD(+) + 4 H(+)(out). In terms of biological role, NDH-1 shuttles electrons from NADH, via FMN and iron-sulfur (Fe-S) centers, to quinones in the respiratory chain. The immediate electron acceptor for the enzyme in this species is believed to be ubiquinone. Couples the redox reaction to proton translocation (for every two electrons transferred, four hydrogen ions are translocated across the cytoplasmic membrane), and thus conserves the redox energy in a proton gradient. The sequence is that of NADH-quinone oxidoreductase subunit K 2 from Syntrophobacter fumaroxidans (strain DSM 10017 / MPOB).